Consider the following 71-residue polypeptide: Large ribosomal subunit protein uL29 (71 aa).

It belongs to the universal ribosomal protein uL29 family. Part of the 50S ribosomal subunit. Interacts with protein L23.

Stabilizes the tertiary rRNA structure within the 23S rRNA domain (domain I) to which it binds. Located at the polypeptide exit tunnel on the outside of the subunit. The sequence is that of Large ribosomal subunit protein uL29 (rpl29) from Haloarcula marismortui (strain ATCC 43049 / DSM 3752 / JCM 8966 / VKM B-1809) (Halobacterium marismortui).